The chain runs to 303 residues: MSVIGRFLYYLRSVLVVLALAGCGFYGVIASILCTLIGKQHLAQWITARCFYHVMKLMLGLDVKVVGEENLAKKPYIMIANHQSTLDIFMLGRIFPPGCTVTAKKSLKYVPFLGWFMALSGTYFLDRSKRQEAIDTLNKGLENVKKNKRALWVFPEGTRSYTSELTMLPFKKGAFHLAQQGKIPIVPVVVSNTSTLVSPKYGVFNRGCMIVRILKPISTENLTKDKIGEFAEKVRDQMVDTLKEIGYSPAINDTTLPPQAIEYAALQHDKKVNKKIKNEPVPSVSISNDVNTHNEGSSVKKMH.

The short motif at 82–87 (HQSTLD) is the HXXXXD motif element. The segment at 278–303 (NEPVPSVSISNDVNTHNEGSSVKKMH) is disordered. Over residues 284–297 (VSISNDVNTHNEGS) the composition is skewed to polar residues.

This sequence belongs to the 1-acyl-sn-glycerol-3-phosphate acyltransferase family.

The protein localises to the lipid droplet. The enzyme catalyses a 1-acyl-sn-glycero-3-phosphate + an acyl-CoA = a 1,2-diacyl-sn-glycero-3-phosphate + CoA. The catalysed reaction is a 1-acyl-sn-glycero-3-phosphocholine + an acyl-CoA = a 1,2-diacyl-sn-glycero-3-phosphocholine + CoA. It catalyses the reaction a 1-acyl-sn-glycero-3-phosphoethanolamine + an acyl-CoA = a 1,2-diacyl-sn-glycero-3-phosphoethanolamine + CoA. It carries out the reaction 1-hexadecanoyl-sn-glycero-3-phosphate + (9Z)-octadecenoyl-CoA = 1-hexadecanoyl-2-(9Z-octadecenoyl)-sn-glycero-3-phosphate + CoA. The enzyme catalyses 1-octadecanoyl-sn-glycero-3-phosphate + (9Z)-octadecenoyl-CoA = 1-octadecanoyl-2-(9Z-octadecenoyl)-sn-glycero-3-phosphate + CoA. The catalysed reaction is 1-(9Z-octadecenoyl)-sn-glycero-3-phospho-L-serine + (9Z)-octadecenoyl-CoA = 1,2-di-(9Z)-octadecenoyl-sn-glycero-3-phospho-L-serine + CoA. It catalyses the reaction a 1-acyl-sn-glycero-3-phospho-(1D-myo-inositol) + (9Z)-octadecenoyl-CoA = a 1-acyl-2-(9Z-octadecenoyl)-sn-glycero-3-phospho-(1D-myo-inositol) + CoA. It carries out the reaction 1-heptadecanoyl-sn-glycero-3-phosphate + (9Z)-octadecenoyl-CoA = 1-heptadecanoyl-2-(9Z)-octadecenoyl-sn-glycero-3-phosphate + CoA. The enzyme catalyses 1-heptadecanoyl-sn-glycero-3-phosphate + dodecanoyl-CoA = 1-heptadecanoyl-2-dodecanoyl-sn-glycero-3-phosphate + CoA. The catalysed reaction is 1-heptadecanoyl-sn-glycero-3-phosphate + tetradecanoyl-CoA = 1-heptadecanoyl-2-tetradecanoyl-sn-glycero-3-phosphate + CoA. Its pathway is phospholipid metabolism; CDP-diacylglycerol biosynthesis; CDP-diacylglycerol from sn-glycerol 3-phosphate: step 2/3. Acyltransferase that catalyzes the sn-2-specific, acyl-CoA-dependent acylation of lysophosphatidic acid (LPA) to phosphatidic acid (PA) in lipid particles. Together with ALE1, plays a central role in PA biosynthesis. PA is the intermediate, from which all glycerophospholipids are synthesized. Can also acylate lysophosphoinositol (LPI) and lysophosphoserine (LPS). The fatty acyl substrates include 18:1-acyl-CoA, 14:0-acyl-CoA, 12:0-acyl-CoA and 10:0-acyl-CoA. The protein is 1-acyl-sn-glycerol-3-phosphate acyltransferase of Saccharomyces cerevisiae (strain ATCC 204508 / S288c) (Baker's yeast).